Reading from the N-terminus, the 964-residue chain is Coatomer subunit beta (964 aa).

5 HEAT repeats span residues 129–166 (ELLEPLMPAIRACLDHRHSYVRRNAVLAIFTIYKNFDW), 238–275 (AERSRFIRCIYNLLNSSSNAVRYESAGTLITLSLAPTA), 314–351 (KVMQDLVMDVLRVLAAPDIEVRRKTLALALDLVYSRNI), 393–430 (DVAANVIPVLVEFLSDTNELAAADVLIFIREAIQKFPA), and 466–506 (SQIL…QQGS). The segment covering 490 to 501 (RRLAGDQTEEQK) has biased composition (basic and acidic residues). A disordered region spans residues 490–530 (RRLAGDQTEEQKQQQGSAGGNAAGSAAEGSGSGNASNKVTS). The span at 512–526 (AGSAAEGSGSGNASN) shows a compositional bias: low complexity.

As to quaternary structure, oligomeric complex that consists of at least the alpha, beta, beta', gamma, delta, epsilon and zeta subunits. As to expression, during oogenesis and spermatogenesis, expressed in ovariole, germarium, testis tip and testis.

The protein localises to the cytoplasm. Its subcellular location is the golgi apparatus membrane. It is found in the cytoplasmic vesicle. The protein resides in the COPI-coated vesicle membrane. In terms of biological role, the coatomer is a cytosolic protein complex that binds to dilysine motifs and reversibly associates with Golgi non-clathrin-coated vesicles, which further mediate biosynthetic protein transport from the ER, via the Golgi up to the trans Golgi network. Coatomer complex is required for budding from Golgi membranes, and is essential for the retrograde Golgi-to-ER transport of dilysine-tagged proteins. Required for limiting lipid storage in lipid droplets. The chain is Coatomer subunit beta from Drosophila melanogaster (Fruit fly).